Here is a 573-residue protein sequence, read N- to C-terminus: Developmental and secondary metabolism regulator veA (573 aa).

Over residues 1–11 (MATLAAPPPPL) the composition is skewed to pro residues. 2 disordered regions span residues 1 to 24 (MATL…SRIT) and 39 to 63 (QPKR…DPPP). The region spanning 27 to 230 (GKKITYKLNI…AEQGCRVRIR (204 aa)) is the Velvet domain. A Nuclear localization signal motif is present at residues 41–46 (KRARAC). Phosphothreonine occurs at positions 167 and 170. Residue Ser183 is modified to Phosphoserine. Disordered regions lie at residues 236–295 (RRRG…RRPS), 307–367 (YQRP…SYQS), and 384–573 (SHIP…ATMR). A compositionally biased stretch (basic and acidic residues) spans 241-260 (KRTEDYDYDNERGYNNRRPD). At Tyr254 the chain carries Phosphotyrosine. Pro residues-rich tracts occupy residues 318 to 339 (SSTP…PSTP) and 347 to 361 (PAPP…PPLH). The segment covering 387–412 (PQQTTTPTHPYSPRSSISHSRNQSIS) has biased composition (low complexity). Over residues 452–493 (PSVNSRSKTPSNMITSLPPIQSLSELPSTTSQPSSAIGSSPA) the composition is skewed to polar residues. A PEST region spans residues 459 to 498 (KTPSNMITSLPPIQSLSELPSTTSQPSSAIGSSPANEPGP). Basic and acidic residues predominate over residues 510–522 (RTYEESFGHDDRP).

It belongs to the velvet family. VeA subfamily. Component of the heterotrimeric velvet complex composed of laeA, veA and velB; VeA acting as a bridging protein between laeA and velB. Interacts with the light-sensing phytochrome fphA. Interacts with llmF. Phosphorylated at Thr-167, Thr-170, Ser-183 and Tyr-254. Thr-167 should be phosphorylated and T170 and S183 should be dephosphorylated to achieve light induction of conidiation. Phosphorylation of Ser-183 and Tyr-254 influence sterigmatocystin production in a light-independent manner. Phosphorylation of Thr-167 and Thr-170 modulates expression of veA.

It is found in the nucleus. Its subcellular location is the cytoplasm. Functionally, component of the velvet transcription factor complex that controls sexual/asexual developmental ratio in response to light, promoting sexual development in the darkness while stimulating asexual sporulation under illumination. The velvet complex acts as a global regulator for secondary metabolite gene expression. Controls the expression of the sterigmatocystin and penicillin gene clusters. Represses the cryptic ors gene cluster producing orsellinic acid and its F9775 derivatives in a laeA-independent manner. Required for full induction of faoA gene expression by fructosyl amines. Positively regulates the expression of the early sexual development gene esdC. Controls the expression of mannoprotein mnpA. In Emericella nidulans (strain FGSC A4 / ATCC 38163 / CBS 112.46 / NRRL 194 / M139) (Aspergillus nidulans), this protein is Developmental and secondary metabolism regulator veA.